Here is a 200-residue protein sequence, read N- to C-terminus: Probable nicotinate-nucleotide adenylyltransferase (200 aa).

This sequence belongs to the NadD family.

It catalyses the reaction nicotinate beta-D-ribonucleotide + ATP + H(+) = deamido-NAD(+) + diphosphate. Its pathway is cofactor biosynthesis; NAD(+) biosynthesis; deamido-NAD(+) from nicotinate D-ribonucleotide: step 1/1. Its function is as follows. Catalyzes the reversible adenylation of nicotinate mononucleotide (NaMN) to nicotinic acid adenine dinucleotide (NaAD). This chain is Probable nicotinate-nucleotide adenylyltransferase, found in Clostridium botulinum (strain Eklund 17B / Type B).